The chain runs to 389 residues: Succinate--CoA ligase [ADP-forming] subunit beta (389 aa).

In terms of domain architecture, ATP-grasp spans 9-244; it reads KEILRKFGVA…LDEEDPAEVE (236 aa). Residues K46, 53 to 55, E99, A102, and E107 contribute to the ATP site; that span reads GRG. Residues N199 and D213 each contribute to the Mg(2+) site. Residues N264 and 321-323 contribute to the substrate site; that span reads GIM.

This sequence belongs to the succinate/malate CoA ligase beta subunit family. Heterotetramer of two alpha and two beta subunits. Mg(2+) serves as cofactor.

The catalysed reaction is succinate + ATP + CoA = succinyl-CoA + ADP + phosphate. The enzyme catalyses GTP + succinate + CoA = succinyl-CoA + GDP + phosphate. It participates in carbohydrate metabolism; tricarboxylic acid cycle; succinate from succinyl-CoA (ligase route): step 1/1. Succinyl-CoA synthetase functions in the citric acid cycle (TCA), coupling the hydrolysis of succinyl-CoA to the synthesis of either ATP or GTP and thus represents the only step of substrate-level phosphorylation in the TCA. The beta subunit provides nucleotide specificity of the enzyme and binds the substrate succinate, while the binding sites for coenzyme A and phosphate are found in the alpha subunit. The sequence is that of Succinate--CoA ligase [ADP-forming] subunit beta from Paraburkholderia xenovorans (strain LB400).